The chain runs to 1013 residues: Poly [ADP-ribose] polymerase 1 (1013 aa).

2 consecutive PARP-type zinc fingers follow at residues 10–92 (YKAE…ESGG) and 113–203 (FAVE…PAVK). Positions 22, 25, 54, 57, 125, 128, 159, and 162 each coordinate Zn(2+). The tract at residues 202-228 (VKSEGKRKADEVDGGVSKKQKKEDEKL) is disordered. The short motif at 207 to 209 (KRK) is the Nuclear localization signal element. Positions 219–353 (KKQKKEDEKL…FKRQDRVFPK (135 aa)) constitute a PADR1 zinc-binding domain. Residues 284–326 (GSLKPCETCKGQLVFKSDAYYCTGDISAWTKCVFKTQTPDRKD) are zinc ribbon. Residues C289, C292, C305, and C315 each coordinate Zn(2+). Residues 353–385 (KDAPPAAATPSSGSTTSAATSVSSASKNLTEAP) are disordered. Low complexity predominate over residues 356-378 (PPAAATPSSGSTTSAATSVSSAS). The segment at 365-523 (GSTTSAATSV…EGGSKSKKMK (159 aa)) is automodification domain. Residues 385–461 (PADKPLTGMK…RVVADDFLTD (77 aa)) form the BRCT domain. E413, E435, E444, E445, E464, E471, E484, and E488 each carry polyADP-ribosyl glutamic acid. Over residues 494-507 (AATKSTGAHSSKST) the composition is skewed to low complexity. Residues 494–522 (AATKSTGAHSSKSTGKVKEEEGGSKSKKM) are disordered. PolyADP-ribosyl glutamic acid is present on residues E512 and E513. Residues 541-637 (CAHVLEQNGK…SNFTKYPNKF (97 aa)) form the WGR domain. The PARP alpha-helical domain occupies 661–778 (KSQLEKPVQD…DIEVAYSLLR (118 aa)). Residues 787–1013 (DPIDINYEKL…IRFNYQTSLW (227 aa)) enclose the PARP catalytic domain. NAD(+) contacts are provided by residues 861-863 (HGS), G870, R877, and S903. E987 functions as the For poly [ADP-ribose] polymerase activity in the catalytic mechanism.

It belongs to the ARTD/PARP family. In terms of assembly, homodimer; PARP-type zinc-fingers from separate parp1 molecules form a dimer module that specifically recognizes DNA strand breaks. Post-translationally, poly-ADP-ribosylated on serine, glutamate and aspartate residues by autocatalysis. Auto-ADP-ribosylation on serine takes place following interaction with HPF1. Auto poly-ADP-ribosylation on serine residues promotes its dissociation from chromatin.

It localises to the chromosome. Its subcellular location is the nucleus. The protein localises to the nucleolus. It is found in the cytoplasm. The protein resides in the cytosol. It carries out the reaction NAD(+) + (ADP-D-ribosyl)n-acceptor = nicotinamide + (ADP-D-ribosyl)n+1-acceptor + H(+).. The catalysed reaction is L-seryl-[protein] + NAD(+) = O-(ADP-D-ribosyl)-L-seryl-[protein] + nicotinamide + H(+). It catalyses the reaction L-aspartyl-[protein] + NAD(+) = 4-O-(ADP-D-ribosyl)-L-aspartyl-[protein] + nicotinamide. The enzyme catalyses L-glutamyl-[protein] + NAD(+) = 5-O-(ADP-D-ribosyl)-L-glutamyl-[protein] + nicotinamide. It carries out the reaction L-tyrosyl-[protein] + NAD(+) = O-(ADP-D-ribosyl)-L-tyrosyl-[protein] + nicotinamide + H(+). The catalysed reaction is L-histidyl-[protein] + NAD(+) = N(tele)-(ADP-D-ribosyl)-L-histidyl-[protein] + nicotinamide + H(+). With respect to regulation, ADP-ribosyltransferase activity is regulated via an allosteric activation mechanism. In absence of activation signal, parp1 is autoinhibited by the PARP alpha-helical domain (also named HD region), which prevents effective NAD(+)-binding. Activity is highly stimulated by signals, such as DNA strand breaks. Binding to damaged DNA unfolds the PARP alpha-helical domain, relieving autoinhibition. Poly-ADP-ribosyltransferase activity is tightly regulated and parp1 is removed from damaged chromatin following initial poly-ADP-ribosylation of chromatin to avoid prolonged residence (trapping) that has cytotoxic consequences. A number of factors or post-translational modifications (auto-poly-ADP-ribosylation) promote parp1 removal from chromatin. Poly-ADP-ribosyltransferase that mediates poly-ADP-ribosylation of proteins and plays a key role in DNA repair. Mediates glutamate, aspartate, serine, histidine or tyrosine ADP-ribosylation of proteins: the ADP-D-ribosyl group of NAD(+) is transferred to the acceptor carboxyl group of target residues and further ADP-ribosyl groups are transferred to the 2'-position of the terminal adenosine moiety, building up a polymer with an average chain length of 20-30 units. Serine ADP-ribosylation of proteins constitutes the primary form of ADP-ribosylation of proteins in response to DNA damage. Specificity for the different amino acids is conferred by interacting factors, such as hpf1 and nmnat1. Following interaction with hpf1, catalyzes serine ADP-ribosylation of target proteins; hpf1 confers serine specificity by completing the parp1 active site. Also catalyzes tyrosine ADP-ribosylation of target proteins following interaction with hpf1. Following interaction with nmnat1, catalyzes glutamate and aspartate ADP-ribosylation of target proteins; nmnat1 confers glutamate and aspartate specificity. Parp1 initiates the repair of DNA breaks: recognizes and binds DNA breaks within chromatin and recruits hpf1, licensing serine ADP-ribosylation of target proteins, such as histones (H2BS6ADPr and H3S10ADPr), thereby promoting decompaction of chromatin and the recruitment of repair factors leading to the reparation of DNA strand breaks. In addition to base excision repair (BER) pathway, also involved in double-strand breaks (DSBs) repair. Mediates the poly-ADP-ribosylation of a number of proteins. In addition to proteins, also able to ADP-ribosylate DNA: catalyzes ADP-ribosylation of DNA strand break termini containing terminal phosphates and a 2'-OH group in single- and double-stranded DNA, respectively. Parp1-mediated DNA repair in neurons plays a role in sleep: senses DNA damage in neurons and promotes sleep, facilitating efficient DNA repair. In addition to DNA repair, also involved in other processes, such as transcription regulation, programmed cell death, membrane repair, adipogenesis and innate immunity. Acts as a repressor of transcription: binds to nucleosomes and modulates chromatin structure in a manner similar to histone H1, thereby altering RNA polymerase II. Acts both as a positive and negative regulator of transcription elongation, depending on the context. Poly-ADP-ribose chains generated by parp1 also play a role in poly-ADP-ribose-dependent cell death, a process named parthanatos. Also acts as a negative regulator of the cGAS-STING pathway by mediating poly-ADP-ribosylation and inactivation of cgas. Acts as a negative regulator of adipogenesis by catalyzing poly ADP-ribosylation of histone H2B on 'Glu-35' (H2BE35ADPr). The polypeptide is Poly [ADP-ribose] polymerase 1 (Danio rerio (Zebrafish)).